The sequence spans 425 residues: uncharacterized protein (425 aa).

This is an uncharacterized protein from Salmonella typhimurium (strain LT2 / SGSC1412 / ATCC 700720).